A 262-amino-acid chain; its full sequence is 3-methyl-2-oxobutanoate hydroxymethyltransferase (262 aa).

2 residues coordinate Mg(2+): D44 and D83. Residues 44–45, D83, and K112 each bind 3-methyl-2-oxobutanoate; that span reads DS. E114 is a Mg(2+) binding site. The active-site Proton acceptor is E180.

Belongs to the PanB family. Homodecamer; pentamer of dimers. The cofactor is Mg(2+).

It localises to the cytoplasm. The catalysed reaction is 3-methyl-2-oxobutanoate + (6R)-5,10-methylene-5,6,7,8-tetrahydrofolate + H2O = 2-dehydropantoate + (6S)-5,6,7,8-tetrahydrofolate. It participates in cofactor biosynthesis; (R)-pantothenate biosynthesis; (R)-pantoate from 3-methyl-2-oxobutanoate: step 1/2. In terms of biological role, catalyzes the reversible reaction in which hydroxymethyl group from 5,10-methylenetetrahydrofolate is transferred onto alpha-ketoisovalerate to form ketopantoate. The polypeptide is 3-methyl-2-oxobutanoate hydroxymethyltransferase (Chromobacterium violaceum (strain ATCC 12472 / DSM 30191 / JCM 1249 / CCUG 213 / NBRC 12614 / NCIMB 9131 / NCTC 9757 / MK)).